The following is a 366-amino-acid chain: MGNTFGRLFRVSTFGESHGGGVGVVIDGCPPRLEISQEEIQIDLDRRKPGQSRIVTPRRENDICEIISGVFDGKTLGTPIAILVRNQDARSQDYNEMAEKFRPSHADATYEAKYGIRNWKGGGRSSARETIGRVAAGAIAKKILKSVYNVEIIGYVKRIKDLEAIIDPNTVTLDEVESNIVRCPNGETAAKMIALIDQIRLDKDSIGGVVECVARNVPKGLGEPVFDKLEADLAKGMMSLPASKGFEIGSGFAGTFLTGSEHNDEYFIDNNGEIRTTSNRSGGIQGGISNGENIIIRTAFKPTATIGKEQKTVTRSGEETTLAAKGRHDPCVLPRAVPMVEAMMALVLCDHLLRFQGQCTISDRFF.

NADP(+) contacts are provided by Arg47 and Arg53. Residues Arg124–Ser126, Gly286, Lys301–Thr305, and Arg327 each bind FMN.

The protein belongs to the chorismate synthase family. Homotetramer. It depends on FMNH2 as a cofactor.

It catalyses the reaction 5-O-(1-carboxyvinyl)-3-phosphoshikimate = chorismate + phosphate. The protein operates within metabolic intermediate biosynthesis; chorismate biosynthesis; chorismate from D-erythrose 4-phosphate and phosphoenolpyruvate: step 7/7. Its function is as follows. Catalyzes the anti-1,4-elimination of the C-3 phosphate and the C-6 proR hydrogen from 5-enolpyruvylshikimate-3-phosphate (EPSP) to yield chorismate, which is the branch point compound that serves as the starting substrate for the three terminal pathways of aromatic amino acid biosynthesis. This reaction introduces a second double bond into the aromatic ring system. In Microcystis aeruginosa (strain NIES-843 / IAM M-2473), this protein is Chorismate synthase.